The sequence spans 510 residues: Sphingolipid C9-methyltransferase B (510 aa).

N-linked (GlcNAc...) asparagine glycosylation occurs at Asn55. Helical transmembrane passes span 62–82 (LLGG…GGGA) and 84–104 (TFVF…WTYA). A glycan (N-linked (GlcNAc...) asparagine) is linked at Asn175. S-adenosyl-L-methionine contacts are provided by residues 227–228 (YT), 264–272 (MLDIGCGWG), 290–295 (TIAENQ), and 320–321 (YR). Asn294 is a glycosylation site (N-linked (GlcNAc...) asparagine).

The protein belongs to the CFA/CMAS family.

Its subcellular location is the membrane. It carries out the reaction a (4E,8E)-4-sphinga-4,8-dienine ceramide + S-adenosyl-L-methionine = a 9-methyl-(4E,8E)-sphinga-4,8-dienine ceramide + S-adenosyl-L-homocysteine + H(+). It functions in the pathway lipid metabolism; sphingolipid metabolism. Its function is as follows. Catalyzes methylation of the sphingoid base component of glucosylceramides (GluCers) at the C9-position. Sphingolipid C9-methylation requires 4,8-desaturated ceramides as substrates. Glucosylceramides play important roles in growth, differentiation and pathogenicity. The methyl group at the C9-position distinguishes fungal glucosylceramides from those of plants and animals and may thus play a role in host-pathogen interactions enabling the host to recognize the fungal attack and initiate specific defense responses. The sequence is that of Sphingolipid C9-methyltransferase B from Emericella nidulans (strain FGSC A4 / ATCC 38163 / CBS 112.46 / NRRL 194 / M139) (Aspergillus nidulans).